The primary structure comprises 94 residues: Ammonia regulation of amino acid uptake protein (94 aa).

Repeats lie at residues 48–57 (HHQIRRRTHQ) and 58–67 (HHQIRRRTHQ).

Its function is as follows. Involved in ammonia regulation of the GAP1 permease. This Saccharomyces cerevisiae (strain ATCC 204508 / S288c) (Baker's yeast) protein is Ammonia regulation of amino acid uptake protein (AUA1).